A 326-amino-acid polypeptide reads, in one-letter code: Pyruvate dehydrogenase E1 component subunit alpha (326 aa).

In terms of assembly, heterodimer of an alpha and a beta chain. Thiamine diphosphate is required as a cofactor.

The enzyme catalyses N(6)-[(R)-lipoyl]-L-lysyl-[protein] + pyruvate + H(+) = N(6)-[(R)-S(8)-acetyldihydrolipoyl]-L-lysyl-[protein] + CO2. In terms of biological role, the pyruvate dehydrogenase complex catalyzes the overall conversion of pyruvate to acetyl-CoA and CO(2). It contains multiple copies of three enzymatic components: pyruvate dehydrogenase (E1), dihydrolipoamide acetyltransferase (E2) and lipoamide dehydrogenase (E3). This is Pyruvate dehydrogenase E1 component subunit alpha (pdhA) from Rickettsia conorii (strain ATCC VR-613 / Malish 7).